The following is a 211-amino-acid chain: uncharacterized protein (211 aa).

3 helical membrane passes run 22 to 42, 111 to 131, and 133 to 153; these read FINF…GLKV, IIGA…WFPV, and GMAG…FMIT.

The protein to E.coli YkgB. It to H.influenzae HI_0219.

It localises to the cell membrane. This is an uncharacterized protein from Mannheimia haemolytica (Pasteurella haemolytica).